A 743-amino-acid chain; its full sequence is DNA ligase 2 (743 aa).

NAD(+) contacts are provided by residues 45–49 (DADFD), 94–95 (SL), and glutamate 125. The active-site N6-AMP-lysine intermediate is the lysine 127. Residues arginine 148, glutamate 185, lysine 301, and lysine 325 each contribute to the NAD(+) site. 4 residues coordinate Zn(2+): cysteine 419, cysteine 422, cysteine 438, and cysteine 444. A BRCT domain is found at 639–728 (EGPRPLEGLT…PERAKEAALP (90 aa)). The disordered stretch occupies residues 720 to 743 (ERAKEAALPVPEAAPAADPENSGE). Over residues 725-743 (AALPVPEAAPAADPENSGE) the composition is skewed to low complexity.

The protein belongs to the NAD-dependent DNA ligase family. LigA subfamily. It depends on Mg(2+) as a cofactor. The cofactor is Mn(2+).

The catalysed reaction is NAD(+) + (deoxyribonucleotide)n-3'-hydroxyl + 5'-phospho-(deoxyribonucleotide)m = (deoxyribonucleotide)n+m + AMP + beta-nicotinamide D-nucleotide.. Its function is as follows. DNA ligase that catalyzes the formation of phosphodiester linkages between 5'-phosphoryl and 3'-hydroxyl groups in double-stranded DNA using NAD as a coenzyme and as the energy source for the reaction. It is essential for DNA replication and repair of damaged DNA. The chain is DNA ligase 2 from Streptomyces griseus subsp. griseus (strain JCM 4626 / CBS 651.72 / NBRC 13350 / KCC S-0626 / ISP 5235).